Here is a 390-residue protein sequence, read N- to C-terminus: Serpin B3 (390 aa).

The residue at position 1 (Met1) is an N-acetylmethionine.

The protein belongs to the serpin family. Ov-serpin subfamily. Interacts with MAPK8/JNK1. In terms of tissue distribution, squamous cells. Expressed in some hepatocellular carcinoma (at protein level).

It is found in the cytoplasm. Functionally, may act as a papain-like cysteine protease inhibitor to modulate the host immune response against tumor cells. Also functions as an inhibitor of UV-induced apoptosis via suppression of the activity of c-Jun NH(2)-terminal kinase (JNK1). The sequence is that of Serpin B3 (SERPINB3) from Homo sapiens (Human).